A 28-amino-acid chain; its full sequence is EASGETFVAENDACKCGSDCKCNPCTCK.

It belongs to the metallothionein superfamily. Type 15 family.

Functionally, metallothioneins have a high content of cysteine residues that bind various heavy metals. The sequence is that of Metallothionein-like protein type 2 LSC210 (LSC210) from Brassica napus (Rape).